An 85-amino-acid polypeptide reads, in one-letter code: ATP synthase subunit c (85 aa).

Transmembrane regions (helical) follow at residues 10–30 (IAVA…FGLL) and 53–73 (FIVA…ALFF).

Belongs to the ATPase C chain family. F-type ATPases have 2 components, F(1) - the catalytic core - and F(0) - the membrane proton channel. F(1) has five subunits: alpha(3), beta(3), gamma(1), delta(1), epsilon(1). F(0) has three main subunits: a(1), b(2) and c(10-14). The alpha and beta chains form an alternating ring which encloses part of the gamma chain. F(1) is attached to F(0) by a central stalk formed by the gamma and epsilon chains, while a peripheral stalk is formed by the delta and b chains.

The protein localises to the cell inner membrane. In terms of biological role, f(1)F(0) ATP synthase produces ATP from ADP in the presence of a proton or sodium gradient. F-type ATPases consist of two structural domains, F(1) containing the extramembraneous catalytic core and F(0) containing the membrane proton channel, linked together by a central stalk and a peripheral stalk. During catalysis, ATP synthesis in the catalytic domain of F(1) is coupled via a rotary mechanism of the central stalk subunits to proton translocation. Functionally, key component of the F(0) channel; it plays a direct role in translocation across the membrane. A homomeric c-ring of between 10-14 subunits forms the central stalk rotor element with the F(1) delta and epsilon subunits. The protein is ATP synthase subunit c of Pseudomonas syringae pv. syringae (strain B728a).